Here is a 307-residue protein sequence, read N- to C-terminus: Ornithine carbamoyltransferase (307 aa).

Carbamoyl phosphate-binding positions include Ser55–Thr58, Gln82, Arg106, and His133–Gln136. Residues Asn164, Asp224, and Ser228 to Met229 each bind L-ornithine. Residues Cys263–Leu264 and Arg291 contribute to the carbamoyl phosphate site.

This sequence belongs to the aspartate/ornithine carbamoyltransferase superfamily. OTCase family.

The protein resides in the cytoplasm. The enzyme catalyses carbamoyl phosphate + L-ornithine = L-citrulline + phosphate + H(+). The protein operates within amino-acid biosynthesis; L-arginine biosynthesis; L-arginine from L-ornithine and carbamoyl phosphate: step 1/3. Functionally, reversibly catalyzes the transfer of the carbamoyl group from carbamoyl phosphate (CP) to the N(epsilon) atom of ornithine (ORN) to produce L-citrulline. The chain is Ornithine carbamoyltransferase from Bradyrhizobium diazoefficiens (strain JCM 10833 / BCRC 13528 / IAM 13628 / NBRC 14792 / USDA 110).